Reading from the N-terminus, the 63-residue chain is Large ribosomal subunit protein bL32 (63 aa).

Residues 1 to 18 (MAHPKRRISRSRRDKRRA) are compositionally biased toward basic residues. A disordered region spans residues 1-27 (MAHPKRRISRSRRDKRRAQYNAKTKAP).

This sequence belongs to the bacterial ribosomal protein bL32 family.

The chain is Large ribosomal subunit protein bL32 from Chloroherpeton thalassium (strain ATCC 35110 / GB-78).